The chain runs to 471 residues: Putative multidrug resistance protein MdtD (471 aa).

Over 1 to 11 (MTDLPDSTRWQ) the chain is Periplasmic. Residues 12–32 (LWIVAFGFFMQSLDTTIVNTA) form a helical membrane-spanning segment. At 33 to 48 (LPSMAQSLGESPLHMH) the chain is on the cytoplasmic side. The chain crosses the membrane as a helical span at residues 49-69 (MVIVSYVLTVAVMLPASGWLA). Topologically, residues 70–76 (DKVGVRN) are periplasmic. Residues 77–97 (IFFTAIVLFTLGSLFCALSGT) form a helical membrane-spanning segment. The Cytoplasmic segment spans residues 98-101 (LNEL). Residues 102–124 (LLARALQGVGGAMMVPVGRLTVM) traverse the membrane as a helical segment. Topologically, residues 125–137 (KIVPREQYMAAMT) are periplasmic. Residues 138-158 (FVTLPGQVGPLLGPALGGLLV) traverse the membrane as a helical segment. Residues 159 to 164 (EYASWH) are Cytoplasmic-facing. A helical membrane pass occupies residues 165-185 (WIFLINIPVGIIGAIATLMLM). Over 186 to 196 (PNYTMQTRRFD) the chain is Periplasmic. Residues 197–217 (LSGFLLLAVGMAVLTLALDGS) traverse the membrane as a helical segment. Residues 218-224 (KGTGLSP) are Cytoplasmic-facing. A helical transmembrane segment spans residues 225-245 (LAITGLVAVGVVALVLYLLHA). At 246 to 262 (RNNNRALFSLKLFRTRT) the chain is on the periplasmic side. A helical transmembrane segment spans residues 263–283 (FSLGLAGSFAGRIGSGMLPFM). Residues 284 to 285 (TP) are Cytoplasmic-facing. The chain crosses the membrane as a helical span at residues 286–306 (VFLQIGLGFSPFHAGLMMIPM). Over 307-341 (VLGSMGMKRIVVQVVNRFGYRRVLVATTLGLSLVT) the chain is Periplasmic. Residues 342–362 (LLFMTTALLGWYYVLPFVLFL) traverse the membrane as a helical segment. At 363-395 (QGMVNSTRFSSMNTLTLKDLPDNLASSGNSLLS) the chain is on the cytoplasmic side. A helical membrane pass occupies residues 396 to 416 (MIMQLSMSIGVTIAGLLLGLF). Residues 417-430 (GSQHVSVDSSTTQT) lie on the Periplasmic side of the membrane. The chain crosses the membrane as a helical span at residues 431-451 (VFMYTWLSMAFIIALPAFIFA). Over 452–471 (RVPNDTHQNVAISRRKRSAQ) the chain is Cytoplasmic.

It belongs to the major facilitator superfamily. TCR/Tet family.

The protein resides in the cell inner membrane. This is Putative multidrug resistance protein MdtD from Escherichia coli O157:H7.